A 256-amino-acid chain; its full sequence is Homeobox protein ceh-34 (256 aa).

A DNA-binding region (homeobox) is located at residues 134–193 (GEETNYCFKSKSRNVLRDAYKKCQYPSVEDKRRLAQQTELSIIQVSNWFKNKRQRERAAG). A disordered region spans residues 187 to 233 (QRERAAGQLDRSSARSNDSDDGSSGCESKPPMNIDSPAPPPLPTSFD).

The protein belongs to the SIX/Sine oculis homeobox family. As to quaternary structure, interacts (via N-terminus) with eya-1 (via C-terminus). Shows expression only in the pharyngeal nervous system.

The protein resides in the nucleus. Functionally, acts as a transcription regulator. Binds to the sequence motif 5'-TCAGGTT-3'. Binds to the cis-regulatory element of proapoptotic factor egl-1 gene and together with eya-1 activates egl-1 expression to promote motor neuron M4 sister cell apoptosis. Also promotes apoptosis of I1 pharyngeal neuron sister cell. Together with eya-1, required to specify the coelomocyte fate in embryonic and postembryonic precursors. Required to establish and maintain the differentiation of all 14 classes of pharyngeal neurons. Controls the neurotransmitter signaling capacity of the neurons and is required for the expression of some neurotransmitter receptors including mgl-1, glr-2 and ser-7. Affects the neuropeptidergic identity of pharyngeal neurons. Required for the pharyngeal expression of sensory receptors gur-3, glu-7 and str-97, antimicrobial defense genes such as spp-12, gpla-1/flr-2 and htrl-1, and pan-pharyngeal nervous system genes such as kin-36. Required to establish and maintain pharyngeal nervous system architecture by ensuring correct axon and synapse organization. Required for expression of eya-1 which may act as a transcriptional cofactor to specify distinct pharyngeal neuron types. Cooperates with several homeobox proteins to specify distinct pharyngeal neuron types including unc-86 in the NSM and I1 neurons, ceh-14 in the I2 neuron, ceh-2 and pros-1 in the I3 neuron, ceh-45 in the M1 neuron, ceh-2 in the M3 neuron, ceh-28 and zag-1 in the M4 neuron, and vab-15 in the M5 neuron. The chain is Homeobox protein ceh-34 (ceh-34) from Caenorhabditis elegans.